The following is an 87-amino-acid chain: MSIKGVVLSYRRSKENQHNNVMIIKPLDVNSREEASKLIGRLVLWKSPSGKILKGKIVRVHGTKGAVRARFEKGLPGQALGDYVEIV.

The protein belongs to the eukaryotic ribosomal protein eL33 family.

This Pyrococcus woesei protein is Large ribosomal subunit protein eL33.